Here is a 726-residue protein sequence, read N- to C-terminus: Catalase-peroxidase (726 aa).

An N-terminal signal peptide occupies residues 1–16; it reads MDNPTDSAGKCPVAHG. A disordered region spans residues 1-26; sequence MDNPTDSAGKCPVAHGNTPRSRSNRD. Residues 96–218 constitute a cross-link (tryptophyl-tyrosyl-methioninium (Trp-Tyr) (with M-244)); the sequence is WHSAGTYRIT…LGAVQMGLIY (123 aa). His-97 (proton acceptor) is an active-site residue. Residues 218–244 constitute a cross-link (tryptophyl-tyrosyl-methioninium (Tyr-Met) (with W-96)); sequence YVNPEGPNGTPDPLASARDIRETFARM. His-259 contributes to the heme b binding site.

This sequence belongs to the peroxidase family. Peroxidase/catalase subfamily. In terms of assembly, homodimer or homotetramer. It depends on heme b as a cofactor. In terms of processing, formation of the three residue Trp-Tyr-Met cross-link is important for the catalase, but not the peroxidase activity of the enzyme.

It carries out the reaction H2O2 + AH2 = A + 2 H2O. The catalysed reaction is 2 H2O2 = O2 + 2 H2O. Bifunctional enzyme with both catalase and broad-spectrum peroxidase activity. In Rhizobium johnstonii (strain DSM 114642 / LMG 32736 / 3841) (Rhizobium leguminosarum bv. viciae), this protein is Catalase-peroxidase.